The primary structure comprises 276 residues: Acyl-[acyl-carrier-protein]--UDP-N-acetylglucosamine O-acyltransferase (276 aa).

Belongs to the transferase hexapeptide repeat family. LpxA subfamily. In terms of assembly, homotrimer.

The protein resides in the cytoplasm. The catalysed reaction is a (3R)-hydroxyacyl-[ACP] + UDP-N-acetyl-alpha-D-glucosamine = a UDP-3-O-[(3R)-3-hydroxyacyl]-N-acetyl-alpha-D-glucosamine + holo-[ACP]. It functions in the pathway glycolipid biosynthesis; lipid IV(A) biosynthesis; lipid IV(A) from (3R)-3-hydroxytetradecanoyl-[acyl-carrier-protein] and UDP-N-acetyl-alpha-D-glucosamine: step 1/6. Involved in the biosynthesis of lipid A, a phosphorylated glycolipid that anchors the lipopolysaccharide to the outer membrane of the cell. In Synechocystis sp. (strain ATCC 27184 / PCC 6803 / Kazusa), this protein is Acyl-[acyl-carrier-protein]--UDP-N-acetylglucosamine O-acyltransferase.